A 239-amino-acid polypeptide reads, in one-letter code: Diablo IAP-binding mitochondrial protein (239 aa).

A mitochondrion-targeting transit peptide spans Met1–Cys21. The IAP-binding signature appears at Ala56 to Ala60. The tract at residues Arg217 to Asp239 is disordered.

This sequence belongs to the Smac/DIABLO protein family. As to quaternary structure, homodimer. Interacts with BIRC2/c-IAP1 (via BIR3 domain). Interacts with BIRC6/BRUCE; inhibits BIRC6 activity. Interacts with BIRC7/livin. Interacts with XIAP/BIRC4 (via BIR3 domain). Interacts with the monomeric and dimeric form of BIRC5/survivin. Interacts with AREL1 (via HECT domain); in the cytoplasm following induction of apoptosis. Interacts with BEX3. In terms of processing, ubiquitinated by BIRC7/livin. Ubiquitinated by BIRC6. Post-translationally, the precursor form is proteolytically cleaved by mitochondrial processing peptidase MPP to remove the transit peptide and produce an intermediate form. This is then processed by PARL to produce the mature cleaved form which is released from mitochondria into the cytosol in apoptotic cells. Ubiquitously expressed with highest expression in testis. Expression is also high in heart, liver, kidney, spleen, prostate and ovary. Low in brain, lung, thymus and peripheral blood leukocytes. Isoform 3 is ubiquitously expressed.

Its subcellular location is the mitochondrion. The protein resides in the cytoplasm. It is found in the cytosol. Its function is as follows. Promotes apoptosis by activating caspases in the cytochrome c/Apaf-1/caspase-9 pathway. Acts by opposing the inhibitory activity of inhibitor of apoptosis proteins (IAP). Inhibits the activity of BIRC6/BRUCE by inhibiting its binding to caspases. In terms of biological role, attenuates the stability and apoptosis-inhibiting activity of XIAP/BIRC4 by promoting XIAP/BIRC4 ubiquitination and degradation through the ubiquitin-proteasome pathway. Also disrupts XIAP/BIRC4 interacting with processed caspase-9 and promotes caspase-3 activation. Defective in the capacity to down-regulate the XIAP/BIRC4 abundance. This chain is Diablo IAP-binding mitochondrial protein, found in Homo sapiens (Human).